Here is a 40-residue protein sequence, read N- to C-terminus: Photosystem II reaction center protein J (40 aa).

Residues 8 to 28 (IPLWLIGTVTGILVIGLIGFF) form a helical membrane-spanning segment.

It belongs to the PsbJ family. As to quaternary structure, PSII is composed of 1 copy each of membrane proteins PsbA, PsbB, PsbC, PsbD, PsbE, PsbF, PsbH, PsbI, PsbJ, PsbK, PsbL, PsbM, PsbT, PsbX, PsbY, PsbZ, Psb30/Ycf12, at least 3 peripheral proteins of the oxygen-evolving complex and a large number of cofactors. It forms dimeric complexes.

It is found in the plastid. It localises to the chloroplast thylakoid membrane. Its function is as follows. One of the components of the core complex of photosystem II (PSII). PSII is a light-driven water:plastoquinone oxidoreductase that uses light energy to abstract electrons from H(2)O, generating O(2) and a proton gradient subsequently used for ATP formation. It consists of a core antenna complex that captures photons, and an electron transfer chain that converts photonic excitation into a charge separation. The sequence is that of Photosystem II reaction center protein J from Zea mays (Maize).